The following is a 291-amino-acid chain: Protein US2 (291 aa).

N-acetylglycine; by host; partial is present on glycine 2. A disordered region spans residues 251–270 (PEVPDEQPTSPGRGPQETDP).

This sequence belongs to the herpesviridae HHV-1 US2 protein family. In terms of assembly, interacts with host KRT18.

It is found in the host cytoplasm. The protein localises to the host nucleus. The protein is Protein US2 of Homo sapiens (Human).